Reading from the N-terminus, the 301-residue chain is F1 operon positive regulatory protein (301 aa).

Residues 8–107 (NSIIQYIEEN…GYTPRQYRMI (100 aa)) form the HTH araC/xylS-type domain. 2 consecutive DNA-binding regions (H-T-H motif) follow at residues 26 to 47 (DCLV…KEYV) and 74 to 97 (IIEI…KKIF).

Positive regulator of F1 operon expression. The polypeptide is F1 operon positive regulatory protein (caf1R) (Yersinia pestis).